The primary structure comprises 484 residues: Aspartyl/glutamyl-tRNA(Asn/Gln) amidotransferase subunit B (484 aa).

The protein belongs to the GatB/GatE family. GatB subfamily. Heterotrimer of A, B and C subunits.

It catalyses the reaction L-glutamyl-tRNA(Gln) + L-glutamine + ATP + H2O = L-glutaminyl-tRNA(Gln) + L-glutamate + ADP + phosphate + H(+). The catalysed reaction is L-aspartyl-tRNA(Asn) + L-glutamine + ATP + H2O = L-asparaginyl-tRNA(Asn) + L-glutamate + ADP + phosphate + 2 H(+). In terms of biological role, allows the formation of correctly charged Asn-tRNA(Asn) or Gln-tRNA(Gln) through the transamidation of misacylated Asp-tRNA(Asn) or Glu-tRNA(Gln) in organisms which lack either or both of asparaginyl-tRNA or glutaminyl-tRNA synthetases. The reaction takes place in the presence of glutamine and ATP through an activated phospho-Asp-tRNA(Asn) or phospho-Glu-tRNA(Gln). In Anaeromyxobacter dehalogenans (strain 2CP-C), this protein is Aspartyl/glutamyl-tRNA(Asn/Gln) amidotransferase subunit B.